The primary structure comprises 109 residues: MQAPVVTETCQTNEEGEQLVLRLRAPVERPRVTWGAGVIDNEHMGRLKSNCCCIYTPPRVWDDPSTWEPEEHETEHCRGHTLPEKKQKPQGGHGSDKDEDKGNCGCDHC.

A disordered region spans residues 63 to 109; the sequence is DPSTWEPEEHETEHCRGHTLPEKKQKPQGGHGSDKDEDKGNCGCDHC. 2 stretches are compositionally biased toward basic and acidic residues: residues 73–87 and 94–109; these read ETEHCRGHTLPEKKQ and GSDKDEDKGNCGCDHC.

This is an uncharacterized protein from Caenorhabditis elegans.